A 240-amino-acid polypeptide reads, in one-letter code: Tetrahydromethanopterin S-methyltransferase subunit A (240 aa).

The Cytoplasmic segment spans residues 1–218 (MADKKEPAPG…KFHSGVHAGK (218 aa)). Histidine 85 contributes to the 5-hydroxybenzimidazolylcob(I)amide binding site. A helical transmembrane segment spans residues 219 to 239 (IEGAMIGLTVTISLLGLLLLG). A topological domain (extracellular) is located at residue arginine 240.

Belongs to the MtrA family. As to quaternary structure, the complex is composed of 8 subunits; MtrA, MtrB, MtrC, MtrD, MtrE, MtrF, MtrG and MtrH. It depends on 5-hydroxybenzimidazolylcob(I)amide as a cofactor.

Its subcellular location is the cell membrane. It catalyses the reaction 5-methyl-5,6,7,8-tetrahydromethanopterin + coenzyme M + 2 Na(+)(in) = 5,6,7,8-tetrahydromethanopterin + methyl-coenzyme M + 2 Na(+)(out). It participates in one-carbon metabolism; methanogenesis from CO(2); methyl-coenzyme M from 5,10-methylene-5,6,7,8-tetrahydromethanopterin: step 2/2. In terms of biological role, part of a complex that catalyzes the formation of methyl-coenzyme M and tetrahydromethanopterin from coenzyme M and methyl-tetrahydromethanopterin. This is an energy-conserving, sodium-ion translocating step. This chain is Tetrahydromethanopterin S-methyltransferase subunit A, found in Methanosarcina barkeri (strain Fusaro / DSM 804).